The chain runs to 83 residues: Small ribosomal subunit protein eS27 (83 aa).

The segment at 37–59 (CPGCFNITTVFSHAQTVVICGSC) adopts a C4-type zinc-finger fold.

This sequence belongs to the eukaryotic ribosomal protein eS27 family. In terms of assembly, component of the small ribosomal subunit (SSU). Mature yeast ribosomes consist of a small (40S) and a large (60S) subunit. The 40S small subunit contains 1 molecule of ribosomal RNA (18S rRNA) and at least 33 different proteins. The large 60S subunit contains 3 rRNA molecules (25S, 5.8S and 5S rRNA) and at least 46 different proteins. It depends on Zn(2+) as a cofactor.

The protein resides in the cytoplasm. Functionally, component of the ribosome, a large ribonucleoprotein complex responsible for the synthesis of proteins in the cell. The small ribosomal subunit (SSU) binds messenger RNAs (mRNAs) and translates the encoded message by selecting cognate aminoacyl-transfer RNA (tRNA) molecules. The large subunit (LSU) contains the ribosomal catalytic site termed the peptidyl transferase center (PTC), which catalyzes the formation of peptide bonds, thereby polymerizing the amino acids delivered by tRNAs into a polypeptide chain. The nascent polypeptides leave the ribosome through a tunnel in the LSU and interact with protein factors that function in enzymatic processing, targeting, and the membrane insertion of nascent chains at the exit of the ribosomal tunnel. The polypeptide is Small ribosomal subunit protein eS27 (rps27) (Schizosaccharomyces pombe (strain 972 / ATCC 24843) (Fission yeast)).